We begin with the raw amino-acid sequence, 282 residues long: Release factor glutamine methyltransferase (282 aa).

Positions 141, 169, and 186 each coordinate S-adenosyl-L-methionine. 186 to 189 lines the substrate pocket; sequence NPPY.

It belongs to the protein N5-glutamine methyltransferase family. PrmC subfamily.

The catalysed reaction is L-glutaminyl-[peptide chain release factor] + S-adenosyl-L-methionine = N(5)-methyl-L-glutaminyl-[peptide chain release factor] + S-adenosyl-L-homocysteine + H(+). Functionally, methylates the class 1 translation termination release factors RF1/PrfA and RF2/PrfB on the glutamine residue of the universally conserved GGQ motif. The polypeptide is Release factor glutamine methyltransferase (Mycoplasma mycoides subsp. mycoides SC (strain CCUG 32753 / NCTC 10114 / PG1)).